The chain runs to 479 residues: Proline--tRNA ligase (479 aa).

This sequence belongs to the class-II aminoacyl-tRNA synthetase family. ProS type 3 subfamily. In terms of assembly, homodimer.

The protein resides in the cytoplasm. The catalysed reaction is tRNA(Pro) + L-proline + ATP = L-prolyl-tRNA(Pro) + AMP + diphosphate. Catalyzes the attachment of proline to tRNA(Pro) in a two-step reaction: proline is first activated by ATP to form Pro-AMP and then transferred to the acceptor end of tRNA(Pro). The sequence is that of Proline--tRNA ligase from Mesomycoplasma hyopneumoniae (strain J / ATCC 25934 / NCTC 10110) (Mycoplasma hyopneumoniae).